Consider the following 95-residue polypeptide: MSGRPQAVPTVQVDNAEVIVTEWRFAPGAETGRHRHGHDYVVVPLTDGTLLLETPEGDRHAPLVAGQAYFRKAGVEHNVINASAHEVVFVETEIK.

One can recognise a Cupin type-2 domain in the interval 23 to 90 (WRFAPGAETG…NASAHEVVFV (68 aa)).

Involved in the degradation of beta-alanine. This Pseudomonas aeruginosa (strain ATCC 15692 / DSM 22644 / CIP 104116 / JCM 14847 / LMG 12228 / 1C / PRS 101 / PAO1) protein is Beta-alanine degradation protein BauB (bauB).